An 898-amino-acid polypeptide reads, in one-letter code: Serine/threonine-protein kinase TAO3 (898 aa).

Positions 24–277 constitute a Protein kinase domain; the sequence is FIGLHEIGHG…SAELLRHDFV (254 aa). Residues 30–38 and K53 each bind ATP; that span reads IGHGSFGAV. D147 functions as the Proton acceptor in the catalytic mechanism. Disordered regions lie at residues 316–362 and 405–425; these read TRNG…SQSS and DEAGHGDPRPEPRPTQSVQSQ. S324 carries the post-translational modification Phosphoserine; by ATM. A phosphoserine mark is found at S331, S343, S346, and S349. The segment covering 334 to 351 has biased composition (polar residues); it reads GTSLNREMDSLGSNHSIP. Low complexity predominate over residues 352–362; it reads SMSVSTGSQSS. T357 is subject to Phosphothreonine. S359 carries the post-translational modification Phosphoserine. The segment covering 405–416 has biased composition (basic and acidic residues); that stretch reads DEAGHGDPRPEP. S442 is modified (phosphoserine). 3 coiled-coil regions span residues 452–502, 548–649, and 754–879; these read EQEN…THAN, FLES…HAML, and LKTL…DMES. Residues 565–596 are disordered; it reads EEMNEDHSTPKKEKQERISKHKENLQHTQAEE. Position 830 is an N6-acetyllysine (K830).

This sequence belongs to the protein kinase superfamily. STE Ser/Thr protein kinase family. STE20 subfamily. Self-associates. Interacts with ERN1 and TRAF2. Interaction with TRAF2 is facilitated under ER stress conditions, such as treatment with tunicamycin, and may promote TRAF2 phosphorylation. Interacts (via N-terminus) with STK25; the interaction promotes STK25 abundance at the level of protein expression and/or stability. As to quaternary structure, (Microbial infection) Interacts with herpes simplex virus 1 UL37 protein. Post-translationally, autophosphorylated. Phosphorylation at Ser-324 by ATM following DNA damage is required for activation of the p38/MAPK14 stress-activated MAPK cascade. Phosphorylated at Ser-324 and on Tyr residues during T cell activation. Phosphorylated by LRRK2. As to expression, ubiquitously expressed at a low level, and highly expressed in peripheral blood leukocytes (PBLs), thymus, spleen, kidney, skeletal muscle, heart and liver.

Its subcellular location is the cytoplasm. It is found in the cell membrane. The protein resides in the membrane raft. It localises to the lipid droplet. It carries out the reaction L-seryl-[protein] + ATP = O-phospho-L-seryl-[protein] + ADP + H(+). The catalysed reaction is L-threonyl-[protein] + ATP = O-phospho-L-threonyl-[protein] + ADP + H(+). Functionally, serine/threonine-protein kinase that acts as a regulator of the p38/MAPK14 stress-activated MAPK cascade and of the MAPK8/JNK cascade. In response to DNA damage, involved in the G2/M transition DNA damage checkpoint by activating the p38/MAPK14 stress-activated MAPK cascade, probably by mediating phosphorylation of upstream MAP2K3 and MAP2K6 kinases. Inhibits basal activity of the MAPK8/JNK cascade and diminishes its activation in response to epidermal growth factor (EGF). Positively regulates canonical T cell receptor (TCR) signaling by preventing early PTPN6/SHP1-mediated inactivation of LCK, ensuring sustained TCR signaling that is required for optimal activation and differentiation of T cells. Phosphorylates PTPN6/SHP1 on 'Thr-394', leading to its polyubiquitination and subsequent proteasomal degradation. Required for cell surface expression of metalloprotease ADAM10 on type 1 transitional B cells which is necessary for their NOTCH-mediated development into marginal zone B cells. Also required for the NOTCH-mediated terminal differentiation of splenic conventional type 2 dendritic cells. Positively regulates osteoblast differentiation by acting as an upstream activator of the JNK pathway. Promotes JNK signaling in hepatocytes and positively regulates hepatocyte lipid storage by inhibiting beta-oxidation and triacylglycerol secretion while enhancing lipid synthesis. Restricts age-associated inflammation by negatively regulating differentiation of macrophages and their production of pro-inflammatory cytokines. Plays a role in negatively regulating the abundance of regulatory T cells in white adipose tissue. The sequence is that of Serine/threonine-protein kinase TAO3 (TAOK3) from Homo sapiens (Human).